Here is a 258-residue protein sequence, read N- to C-terminus: Short-chain dehydrogenase/reductase olcF (258 aa).

Residues Val12, Asp58, and Arg120 each contribute to the NADP(+) site. Catalysis depends on Ser138, which acts as the Proton donor. Residues Tyr152, Lys156, and Val185 each contribute to the NADP(+) site. Tyr152 functions as the Proton acceptor in the catalytic mechanism. Lys156 acts as the Lowers pKa of active site Tyr in catalysis.

The protein belongs to the short-chain dehydrogenases/reductases (SDR) family.

Its pathway is secondary metabolite biosynthesis; terpenoid biosynthesis. In terms of biological role, short-chain dehydrogenase/reductase; part of the gene cluster that mediates the biosynthesis of 15-deoxyoxalicine B. The first step of the pathway is the synthesis of nicotinyl-CoA from nicotinic acid by the nicotinic acid-CoA ligase olcI. Nicotinyl-CoA is then a substrate of polyketide synthase olcA to produce 4-hydroxy-6-(3-pyridinyl)-2H-pyran-2-one (HPPO) which is further prenylated by the polyprenyl transferase olcH to yield geranylgeranyl-HPPO. Geranylgeranyl pyrophosphate is provided by the cluster-specific geranylgeranyl pyrophosphate synthase olcC. The FAD-dependent monooxygenase olcE catalyzes the epoxidation of geranylgeranyl-HPPO and the terpene cyclase olcD catalyzes the cyclization of the terpenoid component, resulting in the formation of the tricyclic terpene moiety seen in predecaturin E. The cytochrome P450 monooxygenase then catalyzes the allylic oxidation of predecaturin E, which is followed by spirocylization with concomitant loss of one molecule of water to form decaturin E. Decaturin E is the substrate of the cytochrome P450 monooxygenase olcJ which hydroxylates it at the C-29 position to form decaturin F. The short-chain dehydrogenase/reductase olcF may catalyze the oxidation of decaturin F to generate the 29-hydroxyl-27-one intermediate, and subsequent hemiacetal formation probably leads to the formation of decaturin C. The dioxygenase olcK may be a peroxisomal enzyme that catalyzes the hydroxylation of decaturin C into decaturin A once decaturin C is shuttled into the peroxisome by the MFS transporter olcL. Finally the cytochrome P450 monooxygenase olcB catalyzes the oxidative rearrangement to yield 15-deoxyoxalicine B. In the absence of olcJ, decaturin E may be shunted to a pathway in which it is oxidized to a ketone, possibly by olcF, to form decaturin D, which undergoes further allylic oxidation to yield decaturin G. Moreover, in the absence of oclK or oclL, oclB can convert decaturin C into 15-deoxyoxalicine A. The polypeptide is Short-chain dehydrogenase/reductase olcF (Penicillium canescens).